Consider the following 341-residue polypeptide: Galactofuranose transporter permease protein YtfT (341 aa).

Over 1–25 (MMPQSLPDTTTPKRRFRWPTGMPQL) the chain is Cytoplasmic. A helical membrane pass occupies residues 26–46 (VALLLVLLVDSLVAPHFWQVV). The Periplasmic segment spans residues 47–65 (LQDGRLFGSPIDILNRAAP). A run of 2 helical transmembrane segments spans residues 66-86 (VALLAIGMTLVIATGGIDLSV) and 87-107 (GAVMAIAGATTAAMTVAGFSL). A topological domain (periplasmic) is located at residue Pro108. Residues 109-129 (IVLLSALGTGILAGLWNGILV) form a helical membrane-spanning segment. Over 130–136 (AILKIQP) the chain is Cytoplasmic. Residues 137–157 (FVATLILMVAGRGVAQLITAG) traverse the membrane as a helical segment. Residues 158–174 (QIVTFNSPDLSWFGSGS) are Periplasmic-facing. A helical transmembrane segment spans residues 175 to 195 (LLFLPTPVIIAVLTLILFWLL). Topologically, residues 196–223 (TRKTALGMFIEAVGINIRAAKNAGVNTR) are cytoplasmic. Residues 224–244 (IIVMLTYVLSGLCAAIAGIIV) form a helical membrane-spanning segment. The Periplasmic portion of the chain corresponds to 245–255 (AADIRGADANN). A helical transmembrane segment spans residues 256 to 276 (AGLWLELDAILAVVIGGGSLM). Over 277-281 (GGRFN) the chain is Cytoplasmic. Helical transmembrane passes span 282–302 (LLLSVVGALIIQGMNTGILLS) and 303–323 (GFPPEMNQVVKAVVVLCVLIV). Over 324-341 (QSQRFISLIKGVRSRDKT) the chain is Cytoplasmic.

The protein belongs to the binding-protein-dependent transport system permease family. AraH/RbsC subfamily. The complex is composed of two ATP-binding proteins (YtfR), two transmembrane proteins (YtfT and YjfF) and a solute-binding protein (YtfQ).

Its subcellular location is the cell inner membrane. Functionally, part of the ABC transporter complex YtfQRT-YjfF involved in galactofuranose transport. Probably responsible for the translocation of the substrate across the membrane. This Escherichia coli (strain K12) protein is Galactofuranose transporter permease protein YtfT (ytfT).